The primary structure comprises 559 residues: MPLVKRNIDPRHLCHTALPRGIKNELECVTNISLANIIRQLSSLSKYAEDIFGELFNEAHSFSFRVNSLQERVDRLSVSVTQLDPKEEELSLQDITMRKAFRSSTIQDQQLFDRKTLPIPLQETYDVCEQPPPLNVLTPYRDDGKEGLKFYTNPSYFFDLWKEKMLQDTEDKRKEKRKQKQKNLDRPHEPEKVPRAPHDRRREWQKLAQGPELAEDDADLLHKHIEVANGPASHFETRPQTYVDHMDGSYSLSALPFSQMSELLSRAEERVLVRPHEPPPPPPMHAAGDARPTPTCVSSAAGLIENRPQSPAAGRTPVFVSPTPPPPPPPLPSALSTSSLRASMTSTPPPPVPPPPPPPAPALQAPAVPPPPAPLQIAPGVLHPAPPPIAPPLVQPSPPVARAAPVCETVPVHPLPQGEVQGLPPPPPPPPLPPPGIRPSSPVTVAALAHPPSGLHPTPSPAPGPHAPLMPPSPPSQVLPASEPKRHPSTLPVISDARSVLLEAIRKGIQLRKVEEQREQEAKHERIENDVATILSRRIAVEYSDSEDDSEFDEVDWLE.

Disordered stretches follow at residues 169-202 (TEDK…DRRR), 307-400 (RPQS…SPPV), and 412-492 (VHPL…STLP). The span at 182-202 (KNLDRPHEPEKVPRAPHDRRR) shows a compositional bias: basic and acidic residues. Positions 322–332 (PTPPPPPPPLP) are enriched in pro residues. Low complexity predominate over residues 333–346 (SALSTSSLRASMTS). Arginine 341 bears the Asymmetric dimethylarginine; alternate mark. Arginine 341 is subject to Omega-N-methylarginine; alternate. Pro residues-rich tracts occupy residues 347–374 (TPPP…PPAP), 384–399 (PAPP…PSPP), 423–437 (LPPP…PPGI), and 458–477 (TPSP…PPSQ). Phosphoserine is present on serine 489. The WH2 domain occupies 497–514 (ARSVLLEAIRKGIQLRKV).

The protein belongs to the SCAR/WAVE family. In terms of assembly, component of the WAVE1 complex composed of ABI2, CYFIP1 or CYFIP2, BRK1, NCKAP1 and WASF1/WAVE1. Within the complex, a heterodimer containing NCKAP1 and CYFIP1 interacts with a heterotrimer formed by WAVE1, ABI2 and BRK1. CYFIP2 binds to activated RAC1 which causes the complex to dissociate, releasing activated WASF1. The complex can also be activated by NCK1. Binds actin and the Arp2/3 complex. Interacts with BAIAP2. Interacts with SHANK3; the interaction mediates the association of SHANK3 with the WAVE1 complex. Interacts with ABI1 (via N-terminus). Interacts with SORBS2; this interaction greatly enhances phosphorylation by ABL1 and dephosphorylation by PTPN12 and might mediate partial to focal adhesion sites. In terms of tissue distribution, expressed in hippocampal neurons (at protein level).

The protein localises to the cytoplasm. The protein resides in the cytoskeleton. It localises to the synapse. Its subcellular location is the cell junction. It is found in the focal adhesion. Its function is as follows. Downstream effector molecule involved in the transmission of signals from tyrosine kinase receptors and small GTPases to the actin cytoskeleton. Promotes formation of actin filaments. Part of the WAVE complex that regulates lamellipodia formation. The WAVE complex regulates actin filament reorganization via its interaction with the Arp2/3 complex. As component of the WAVE1 complex, required for BDNF-NTRK2 endocytic trafficking and signaling from early endosomes. Also involved in the regulation of mitochondrial dynamics. The chain is Actin-binding protein WASF1 (Wasf1) from Rattus norvegicus (Rat).